The chain runs to 118 residues: NADH-ubiquinone oxidoreductase chain 3 (118 aa).

Transmembrane regions (helical) follow at residues 7–27 and 87–107; these read ICIY…LPFL and IDPF…IGSL.

It belongs to the complex I subunit 3 family.

The protein resides in the mitochondrion membrane. The catalysed reaction is a ubiquinone + NADH + 5 H(+)(in) = a ubiquinol + NAD(+) + 4 H(+)(out). Its function is as follows. Core subunit of the mitochondrial membrane respiratory chain NADH dehydrogenase (Complex I) that is believed to belong to the minimal assembly required for catalysis. Complex I functions in the transfer of electrons from NADH to the respiratory chain. The immediate electron acceptor for the enzyme is believed to be ubiquinone. In Solanum tuberosum (Potato), this protein is NADH-ubiquinone oxidoreductase chain 3 (ND3).